The sequence spans 434 residues: Mannose-6-phosphate isomerase (434 aa).

3 residues coordinate Zn(2+): glutamine 109, histidine 111, and glutamate 136. The span at 181–191 shows a compositional bias: polar residues; the sequence is SLGLPTSQPPD. The segment at 181-200 is disordered; that stretch reads SLGLPTSQPPDTSLFKPTES. Histidine 291 contacts Zn(2+). Arginine 310 is a catalytic residue.

The protein belongs to the mannose-6-phosphate isomerase type 1 family. The cofactor is Zn(2+).

The protein resides in the cytoplasm. The catalysed reaction is D-mannose 6-phosphate = D-fructose 6-phosphate. Its pathway is nucleotide-sugar biosynthesis; GDP-alpha-D-mannose biosynthesis; alpha-D-mannose 1-phosphate from D-fructose 6-phosphate: step 1/2. Functionally, involved in the synthesis of the GDP-mannose and dolichol-phosphate-mannose required for a number of critical mannosyl transfer reactions. The polypeptide is Mannose-6-phosphate isomerase (MAN1) (Cryptococcus neoformans var. neoformans serotype D (strain JEC21 / ATCC MYA-565) (Filobasidiella neoformans)).